The sequence spans 356 residues: Heme A synthase (356 aa).

5 helical membrane passes run 24–44 (IAIW…VGGV), 106–126 (FHRL…VYFM), 139–159 (LLGI…MVMS), 174–194 (AHLG…TGLI), and 214–234 (AWML…VAGI). Histidine 276 serves as a coordination point for heme. Transmembrane regions (helical) follow at residues 278 to 298 (LIAW…KQLS), 309 to 329 (LLLL…LLSV), and 331 to 351 (LTFA…ALWV). Residue histidine 337 coordinates heme.

This sequence belongs to the COX15/CtaA family. Type 2 subfamily. As to quaternary structure, interacts with CtaB. Heme b is required as a cofactor.

The protein localises to the cell membrane. It carries out the reaction Fe(II)-heme o + 2 A + H2O = Fe(II)-heme a + 2 AH2. It participates in porphyrin-containing compound metabolism; heme A biosynthesis; heme A from heme O: step 1/1. Catalyzes the conversion of heme O to heme A by two successive hydroxylations of the methyl group at C8. The first hydroxylation forms heme I, the second hydroxylation results in an unstable dihydroxymethyl group, which spontaneously dehydrates, resulting in the formyl group of heme A. This chain is Heme A synthase, found in Nitrosomonas eutropha (strain DSM 101675 / C91 / Nm57).